A 202-amino-acid chain; its full sequence is Ig delta chain C region (202 aa).

Residues 32–58 (KSKTFKLPETRNSQSSKKANPTPQAKN) form a disordered region. Polar residues predominate over residues 41–56 (TRNSQSSKKANPTPQA). One can recognise an Ig-like domain in the interval 66–178 (PTATKNIVGA…TKLNASKSLE (113 aa)).

This chain is Ig delta chain C region, found in Rattus norvegicus (Rat).